An 84-amino-acid chain; its full sequence is Beta-defensin 119 (84 aa).

An N-terminal signal peptide occupies residues 1 to 21; it reads MKFLFLFLAILLATKIPVISG. Disulfide bonds link cysteine 28-cysteine 55, cysteine 35-cysteine 49, and cysteine 39-cysteine 56.

The protein belongs to the beta-defensin family.

It is found in the secreted. In terms of biological role, has antibacterial activity. This is Beta-defensin 119 (DEFB119) from Macaca fascicularis (Crab-eating macaque).